Reading from the N-terminus, the 240-residue chain is Aspartate/glutamate leucyltransferase (240 aa).

The protein belongs to the R-transferase family. Bpt subfamily.

The protein resides in the cytoplasm. The enzyme catalyses N-terminal L-glutamyl-[protein] + L-leucyl-tRNA(Leu) = N-terminal L-leucyl-L-glutamyl-[protein] + tRNA(Leu) + H(+). The catalysed reaction is N-terminal L-aspartyl-[protein] + L-leucyl-tRNA(Leu) = N-terminal L-leucyl-L-aspartyl-[protein] + tRNA(Leu) + H(+). Functions in the N-end rule pathway of protein degradation where it conjugates Leu from its aminoacyl-tRNA to the N-termini of proteins containing an N-terminal aspartate or glutamate. The polypeptide is Aspartate/glutamate leucyltransferase (Gluconobacter oxydans (strain 621H) (Gluconobacter suboxydans)).